Reading from the N-terminus, the 566-residue chain is 15-cis-phytoene desaturase, chloroplastic/chromoplastic (566 aa).

The transit peptide at 1–86 (MVVFGNVSAA…ASLSASFRSA (86 aa)) directs the protein to the chloroplast and chromoplast. FAD-binding positions include alanine 103, 122 to 123 (EA), lysine 130, 147 to 148 (HI), and tyrosine 153. Residue arginine 288 coordinates substrate. FAD is bound by residues isoleucine 330 and aspartate 519. Position 527 (alanine 527) interacts with substrate. Methionine 529 is an FAD binding site.

Belongs to the carotenoid/retinoid oxidoreductase family. Homotetramer. It depends on FAD as a cofactor.

The protein resides in the plastid. It is found in the chloroplast. The protein localises to the chromoplast. Its subcellular location is the membrane. It catalyses the reaction 2 a plastoquinone + 15-cis-phytoene = 9,9',15-tri-cis-zeta-carotene + 2 a plastoquinol. The protein operates within carotenoid biosynthesis; lycopene biosynthesis. Converts phytoene into zeta-carotene via the intermediary of phytofluene by the symmetrical introduction of two double bonds at the C-11 and C-11' positions of phytoene with a concomitant isomerization of two neighboring double bonds at the C9 and C9' positions from trans to cis. This Arabidopsis thaliana (Mouse-ear cress) protein is 15-cis-phytoene desaturase, chloroplastic/chromoplastic (PDS).